Consider the following 997-residue polypeptide: Glutamate [NMDA] receptor subunit 1 (997 aa).

A signal peptide spans 1 to 26 (MAVAGFVFCWPLLGLTIVLLVAPIDA). The Extracellular segment spans residues 27–573 (AQRHTASDNP…TLVSFLQPFS (547 aa)). Asn-258, Asn-314, Asn-345, Asn-397, Asn-454, Asn-481, and Asn-501 each carry an N-linked (GlcNAc...) asparagine glycan. Glycine is bound by residues 530–532 (PLT) and Arg-537. Residues 574–594 (NTLWILVMVSVHVVALVLYLL) form a helical membrane-spanning segment. Over 595 to 651 (DRFSPFGRFKLSHSDSNEEKALNLSSAVWFAWGVLLNSGIGEGTPRSFSARVLGMVW) the chain is Cytoplasmic. A helical transmembrane segment spans residues 652–672 (AGFAMIIVASYTANLAAFLVL). The Extracellular segment spans residues 673 to 831 (ERPKTKLSGI…KTPNTLGLKN (159 aa)). Asn-693 is a glycosylation site (N-linked (GlcNAc...) asparagine). Ser-703 and Asp-747 together coordinate glycine. The helical transmembrane segment at 832–852 (MAGVFILVGVGIAGGVGLIII) threads the bilayer. Over 853 to 997 (EVIYKKHQVK…YTSDVSHLVV (145 aa)) the chain is Cytoplasmic. Residues 970–997 (LGKTRPQQSVLPPRYSPGYTSDVSHLVV) form a disordered region. Residues 987-997 (GYTSDVSHLVV) are compositionally biased toward polar residues.

Belongs to the glutamate-gated ion channel (TC 1.A.10.1) family. Forms a heteromeric NMDA channel with Nmdar2.

The protein resides in the cell membrane. It is found in the postsynaptic cell membrane. The protein localises to the postsynaptic density. Its function is as follows. NMDA receptor subtype of glutamate-gated ion channels with high calcium permeability and voltage-dependent sensitivity to magnesium. Mediated by glycine. This protein plays a key role in synaptic plasticity, synaptogenesis, excitotoxicity, memory acquisition and learning. It mediates neuronal functions in glutamate neurotransmission. Is involved in the cell surface targeting of NMDA receptors. Plays a role in associative learning and in long-term memory consolidation. The chain is Glutamate [NMDA] receptor subunit 1 from Drosophila yakuba (Fruit fly).